We begin with the raw amino-acid sequence, 351 residues long: Peptide chain release factor 1 (351 aa).

Glutamine 229 carries the N5-methylglutamine modification.

This sequence belongs to the prokaryotic/mitochondrial release factor family. In terms of processing, methylated by PrmC. Methylation increases the termination efficiency of RF1.

Its subcellular location is the cytoplasm. Functionally, peptide chain release factor 1 directs the termination of translation in response to the peptide chain termination codons UAG and UAA. The protein is Peptide chain release factor 1 of Cereibacter sphaeroides (strain ATCC 17029 / ATH 2.4.9) (Rhodobacter sphaeroides).